The following is a 454-amino-acid chain: Apyrase (454 aa).

At 1–7 the chain is on the cytoplasmic side; it reads MLNQNSH. A helical; Signal-anchor for type II membrane protein transmembrane segment spans residues 8 to 28; sequence FIFIILAIFLVLPLSLLSKNV. Topologically, residues 29–454 are extracellular; that stretch reads NAQIPLRRHL…TTNKIRVASS (426 aa). 48–58 is a binding site for ATP; that stretch reads VIFDAGSTGSR. N-linked (GlcNAc...) asparagine glycosylation occurs at asparagine 151. The active-site Proton acceptor is the glutamate 170. ATP is bound at residue 194 to 204; it reads ATIDLGGGSVQ. The N-linked (GlcNAc...) asparagine glycan is linked to asparagine 262.

It belongs to the GDA1/CD39 NTPase family. Requires Ca(2+) as cofactor. Post-translationally, the N-terminus is blocked.

It localises to the membrane. It carries out the reaction a ribonucleoside 5'-triphosphate + 2 H2O = a ribonucleoside 5'-phosphate + 2 phosphate + 2 H(+). In terms of biological role, catalyzes the hydrolysis of phosphoanhydride bonds of nucleoside tri- and di-phosphates. The polypeptide is Apyrase (RROP1) (Solanum tuberosum (Potato)).